A 212-amino-acid polypeptide reads, in one-letter code: Redox-sensing transcriptional repressor Rex (212 aa).

Positions 17 to 56 (KYHRYLQELMENDVDRISSKELSEKIGFTASQIRQDLNCF) form a DNA-binding region, H-T-H motif. 91–96 (GAGNIG) lines the NAD(+) pocket.

It belongs to the transcriptional regulatory Rex family. As to quaternary structure, homodimer.

It is found in the cytoplasm. In terms of biological role, modulates transcription in response to changes in cellular NADH/NAD(+) redox state. The sequence is that of Redox-sensing transcriptional repressor Rex from Clostridium perfringens (strain ATCC 13124 / DSM 756 / JCM 1290 / NCIMB 6125 / NCTC 8237 / Type A).